A 485-amino-acid chain; its full sequence is Polyol:NADP oxidoreductase (485 aa).

It belongs to the mannitol dehydrogenase family.

The protein resides in the cytoplasm. In Gluconobacter oxydans (strain 621H) (Gluconobacter suboxydans), this protein is Polyol:NADP oxidoreductase (por).